The chain runs to 214 residues: Small ribosomal subunit protein uS2 (214 aa).

It belongs to the universal ribosomal protein uS2 family.

In Thermofilum pendens (strain DSM 2475 / Hrk 5), this protein is Small ribosomal subunit protein uS2.